The chain runs to 386 residues: Succinate--CoA ligase [ADP-forming] subunit beta (386 aa).

The ATP-grasp domain maps to 9-244 (KEVLRKYGVV…LDEEDADEIE (236 aa)). ATP is bound by residues lysine 46, 53-55 (GRG), glutamate 99, alanine 102, and glutamate 107. Positions 199 and 213 each coordinate Mg(2+). Residues asparagine 264 and 321–323 (GIM) contribute to the substrate site.

It belongs to the succinate/malate CoA ligase beta subunit family. In terms of assembly, heterotetramer of two alpha and two beta subunits. It depends on Mg(2+) as a cofactor.

The enzyme catalyses succinate + ATP + CoA = succinyl-CoA + ADP + phosphate. The catalysed reaction is GTP + succinate + CoA = succinyl-CoA + GDP + phosphate. Its pathway is carbohydrate metabolism; tricarboxylic acid cycle; succinate from succinyl-CoA (ligase route): step 1/1. In terms of biological role, succinyl-CoA synthetase functions in the citric acid cycle (TCA), coupling the hydrolysis of succinyl-CoA to the synthesis of either ATP or GTP and thus represents the only step of substrate-level phosphorylation in the TCA. The beta subunit provides nucleotide specificity of the enzyme and binds the substrate succinate, while the binding sites for coenzyme A and phosphate are found in the alpha subunit. The chain is Succinate--CoA ligase [ADP-forming] subunit beta from Azoarcus sp. (strain BH72).